A 198-amino-acid polypeptide reads, in one-letter code: uncharacterized protein (198 aa).

Positions Met1–Gly110 constitute a PA14 domain.

Belongs to the flocculin family.

This is an uncharacterized protein from Saccharomyces cerevisiae (strain ATCC 204508 / S288c) (Baker's yeast).